The chain runs to 48 residues: VEWTDAERGAILSLWGKIDPDELGPALLARXXLVYXXTQRYFASFGDL.

The 47-residue stretch at 2–48 (EWTDAERGAILSLWGKIDPDELGPALLARXXLVYXXTQRYFASFGDL) folds into the Globin domain.

Belongs to the globin family. Heterotetramer of two alpha chains and two beta chains. In terms of tissue distribution, red blood cells.

In terms of biological role, involved in oxygen transport from gills to the various peripheral tissues. The chain is Hemoglobin subunit beta-B from Catostomus clarkii (Desert sucker).